The following is a 121-amino-acid chain: Large ribosomal subunit protein uL14 (121 aa).

The protein belongs to the universal ribosomal protein uL14 family. In terms of assembly, part of the 50S ribosomal subunit. Forms a cluster with proteins L3 and L19. In the 70S ribosome, L14 and L19 interact and together make contacts with the 16S rRNA in bridges B5 and B8.

Its function is as follows. Binds to 23S rRNA. Forms part of two intersubunit bridges in the 70S ribosome. The protein is Large ribosomal subunit protein uL14 of Prochlorococcus marinus (strain SARG / CCMP1375 / SS120).